The sequence spans 429 residues: 26S proteasome regulatory subunit RPN7 (429 aa).

Phosphoserine is present on residues S8 and S77. The stretch at 131-164 (AQAWINLGEYYAQIGDKDNAEKTLGKSLSKAIST) is one TPR repeat. A PCI domain is found at 223 to 395 (NFKEAAKLLV…GIVETNRPDN (173 aa)).

As to quaternary structure, the 26S proteasome is composed of a core protease, known as the 20S proteasome, capped at one or both ends by the 19S regulatory complex (RC). The RC is composed of at least 18 different subunits in two subcomplexes, the base and the lid, which form the portions proximal and distal to the 20S proteolytic core, respectively. Component of the lid subcomplex of the 19S RC.

It localises to the nucleus. Its function is as follows. Component of the 19S cap proteasome complex which acts as a regulatory subunit of the 26S proteasome, involved in the ATP-dependent degradation of ubiquitinated proteins. This Saccharomyces cerevisiae (strain ATCC 204508 / S288c) (Baker's yeast) protein is 26S proteasome regulatory subunit RPN7.